The chain runs to 38 residues: Photosystem II reaction center protein L (38 aa).

The chain crosses the membrane as a helical span at residues 17–37 (SLYWGLLLIXVLAVLFSNYFF).

This sequence belongs to the PsbL family. In terms of assembly, PSII is composed of 1 copy each of membrane proteins PsbA, PsbB, PsbC, PsbD, PsbE, PsbF, PsbH, PsbI, PsbJ, PsbK, PsbL, PsbM, PsbT, PsbX, PsbY, PsbZ, Psb30/Ycf12, at least 3 peripheral proteins of the oxygen-evolving complex and a large number of cofactors. It forms dimeric complexes.

The protein localises to the plastid. It is found in the chloroplast thylakoid membrane. Functionally, one of the components of the core complex of photosystem II (PSII). PSII is a light-driven water:plastoquinone oxidoreductase that uses light energy to abstract electrons from H(2)O, generating O(2) and a proton gradient subsequently used for ATP formation. It consists of a core antenna complex that captures photons, and an electron transfer chain that converts photonic excitation into a charge separation. This subunit is found at the monomer-monomer interface and is required for correct PSII assembly and/or dimerization. In Allium textile (Textile onion), this protein is Photosystem II reaction center protein L.